The chain runs to 504 residues: Putative F-box/FBD/LRR-repeat protein At3g59240 (504 aa).

One can recognise an F-box domain in the interval 7–60; it reads KDIISDLPEALICHLLSFVPTKEAALTSLLSEKWRYLFAFAPILDFDDSVWMQS. LRR repeat units follow at residues 69–95, 145–171, 173–198, 286–312, 329–354, 369–396, and 403–428; these read HRKF…SLNC, RIRT…DLSS, WFRD…TMSD, TNLF…TFCC, DKDV…VFKG, CLCK…KFGE, and DEEK…ILHY. In terms of domain architecture, FBD spans 382-427; the sequence is SSSPVKVLKILKFGEVASYFGDEEKQLELVKYFLETMPNLEQMILH.

The chain is Putative F-box/FBD/LRR-repeat protein At3g59240 from Arabidopsis thaliana (Mouse-ear cress).